The chain runs to 137 residues: Nucleoside diphosphate kinase (137 aa).

The ATP site is built by K9, F57, R85, T91, R102, and N112. The Pros-phosphohistidine intermediate role is filled by H115.

This sequence belongs to the NDK family. As to quaternary structure, homotetramer. Requires Mg(2+) as cofactor.

The protein localises to the cytoplasm. It catalyses the reaction a 2'-deoxyribonucleoside 5'-diphosphate + ATP = a 2'-deoxyribonucleoside 5'-triphosphate + ADP. The catalysed reaction is a ribonucleoside 5'-diphosphate + ATP = a ribonucleoside 5'-triphosphate + ADP. In terms of biological role, major role in the synthesis of nucleoside triphosphates other than ATP. The ATP gamma phosphate is transferred to the NDP beta phosphate via a ping-pong mechanism, using a phosphorylated active-site intermediate. In Thermus thermophilus (strain ATCC 27634 / DSM 579 / HB8), this protein is Nucleoside diphosphate kinase.